The chain runs to 174 residues: MAVKIRLTRMGKIRAPYYRIVVADARTKRDGRAIEEIGQYDPKQEPSLIRVNSERVAYWLSVGAQPTEPVKALLKVTGDWQRFTGEPAPPPMKTAPPKPDKKALFEAAAKEAAGEPRAEATTSRKRSGKHDKGAETTPAAEAAPDAAASADEPAGGASTAAESQDATTDATPSA.

A disordered region spans residues Q81–A174. Residues P87 to P97 are compositionally biased toward pro residues. Residues K98–A118 show a composition bias toward basic and acidic residues. The segment covering E135 to S158 has biased composition (low complexity). The segment covering A160–A174 has biased composition (polar residues).

Belongs to the bacterial ribosomal protein bS16 family.

The chain is Small ribosomal subunit protein bS16 from Acidothermus cellulolyticus (strain ATCC 43068 / DSM 8971 / 11B).